The following is a 203-amino-acid chain: bMERB domain-containing protein 1 (203 aa).

In terms of domain architecture, bMERB spans 3–149 (LKQSLSVHLE…EQEEDKEMAD (147 aa)). The disordered stretch occupies residues 160-186 (KVTKSSASSRAEKKAEPPPSKPTVAKT).

This Rattus norvegicus (Rat) protein is bMERB domain-containing protein 1 (Bmerb1).